The sequence spans 370 residues: Transcription factor E2F2 (370 aa).

Positions 1-73 are disordered; that stretch reads MYKRKTASIV…QSQSQPGQQR (73 aa). The segment covering 15–26 has biased composition (low complexity); that stretch reads SAAGTTSSAMMM. The span at 31–49 shows a compositional bias: polar residues; sequence AETSVRSQSYESTPVSMDT. Low complexity predominate over residues 59 to 73; sequence SPSNSQSQSQPGQQR. A DNA-binding region spans residues 72 to 137; the sequence is QRSVGSLVLL…GRHCSLVRWR (66 aa). Positions 137 to 226 are dimerization; the sequence is RGGGFNNAKD…VDIKRNHYEL (90 aa).

Belongs to the E2F/DP family. In terms of assembly, forms a heterodimer with Dp. Interacts with Rbf/Rbf1 and Rbf2. Component of the DREAM complex, which is at least composed of Myb, Caf1-55, mip40, mip120, mip130, E2f2, Dp, Rbf, Rbf2, lin-52, HDAC1/Rpd3 and l(3)mbt. As to expression, ubiquitously expressed in eye disk.

Its subcellular location is the nucleus. Transcriptional repressor that binds to E2f sites and represses E2f-regulated target genes. Binding to E2f sites requires transcription factor Dp. Acts synergistically with Rbf2 to antagonize E2f1-mediated transcriptional activation. Component of the DREAM complex, a multiprotein complex that can both act as a transcription activator or repressor depending on the context. The DREAM complex is required for recruiting E2f2 at differentiation-specific promoters and for stabilizing E2f2-Rbf complexes during S phase. During development, the complex represses transcription of developmentally controlled E2f target genes. During oogenesis, plays a role in restricting DNA synthesis to sites of chorion gene amplification in late stage ovarian follicle cells. Plays an inhibitory role in ionizing radiation (IR)-induced p53-independent apoptosis. May be involved in cell cycle exit by temporarily limiting CycE-dependent activation of E2f-regulated transcription. The polypeptide is Transcription factor E2F2 (E2f2) (Drosophila melanogaster (Fruit fly)).